The following is a 352-amino-acid chain: tRNA N6-adenosine threonylcarbamoyltransferase (352 aa).

Histidine 117 and histidine 121 together coordinate Fe cation. Substrate is bound by residues 140 to 144 (LVSGG), aspartate 173, glycine 186, and asparagine 287. Residue aspartate 315 participates in Fe cation binding.

It belongs to the KAE1 / TsaD family. Fe(2+) serves as cofactor.

The protein resides in the cytoplasm. The enzyme catalyses L-threonylcarbamoyladenylate + adenosine(37) in tRNA = N(6)-L-threonylcarbamoyladenosine(37) in tRNA + AMP + H(+). Functionally, required for the formation of a threonylcarbamoyl group on adenosine at position 37 (t(6)A37) in tRNAs that read codons beginning with adenine. Is involved in the transfer of the threonylcarbamoyl moiety of threonylcarbamoyl-AMP (TC-AMP) to the N6 group of A37, together with TsaE and TsaB. TsaD likely plays a direct catalytic role in this reaction. The polypeptide is tRNA N6-adenosine threonylcarbamoyltransferase (Psychrobacter cryohalolentis (strain ATCC BAA-1226 / DSM 17306 / VKM B-2378 / K5)).